The following is a 372-amino-acid chain: MRSIIADSKRLVVKVGSSLVTNDGKGLDHAAIGRWAAQIAALRAQGKEVVLVSSGAIAEGMQRLGWSKRPREIDELQAAAAVGQMGLAQVYESRFTEHDIRTAQILLTHADLADRERYLNARSTLLTLLRLGVVPIINENDTVVTDEIKFGDNDTLGALVANLIEGDALIILTDQSGLFTADPRKDPNATLVAEASAGAPDLEAMAGGAGSSLGRGGMLTKILAAKRAAHSGANTVIASGRETDVLVRLAAGEAIGTQLIARTARMAARKQWMADHLQVRGHVVIDAGAVEKLTAGGKSLLPIGVIGVQGAFARGEVIACVGPDGREVARGLTNYSSAETKLIHRKPSGEIETVLGYMLEPELIHRDNLVLV.

Lys14 provides a ligand contact to ATP. 3 residues coordinate substrate: Ser54, Asp141, and Asn153. 173 to 174 serves as a coordination point for ATP; that stretch reads TD. Residues 280–358 form the PUA domain; that stretch reads RGHVVIDAGA…GEIETVLGYM (79 aa).

The protein belongs to the glutamate 5-kinase family.

Its subcellular location is the cytoplasm. It carries out the reaction L-glutamate + ATP = L-glutamyl 5-phosphate + ADP. The protein operates within amino-acid biosynthesis; L-proline biosynthesis; L-glutamate 5-semialdehyde from L-glutamate: step 1/2. In terms of biological role, catalyzes the transfer of a phosphate group to glutamate to form L-glutamate 5-phosphate. The sequence is that of Glutamate 5-kinase from Burkholderia ambifaria (strain ATCC BAA-244 / DSM 16087 / CCUG 44356 / LMG 19182 / AMMD) (Burkholderia cepacia (strain AMMD)).